Here is a 224-residue protein sequence, read N- to C-terminus: Probable C-&gt;U-editing enzyme APOBEC-2 (224 aa).

The segment at 1–25 (MAQKEEAAAATEAASQNGEDLENLD) is disordered. E60 and H98 together coordinate Zn(2+). Positions 64–169 (GRNKTFLCYV…LEIQDALKKL (106 aa)) constitute a CMP/dCMP-type deaminase domain. E100 functions as the Proton donor in the catalytic mechanism. Zn(2+) is bound by residues C128 and C131.

This sequence belongs to the cytidine and deoxycytidylate deaminase family. Homotetramer. Requires Zn(2+) as cofactor.

The enzyme catalyses cytidine(6666) in apoB mRNA + H2O + H(+) = uridine(6666) in apoB mRNA + NH4(+). In terms of biological role, probable C to U editing enzyme whose physiological substrate is not yet known. Does not display detectable apoB mRNA editing. Has a low intrinsic cytidine deaminase activity. May play a role in the epigenetic regulation of gene expression through the process of active DNA demethylation. The chain is Probable C-&gt;U-editing enzyme APOBEC-2 (APOBEC2) from Pongo pygmaeus (Bornean orangutan).